Here is a 104-residue protein sequence, read N- to C-terminus: A-type ATP synthase subunit F (104 aa).

The protein belongs to the V-ATPase F subunit family. As to quaternary structure, has multiple subunits with at least A(3), B(3), C, D, E, F, H, I and proteolipid K(x).

Its subcellular location is the cell membrane. Its function is as follows. Component of the A-type ATP synthase that produces ATP from ADP in the presence of a proton gradient across the membrane. The sequence is that of A-type ATP synthase subunit F from Thermoplasma acidophilum (strain ATCC 25905 / DSM 1728 / JCM 9062 / NBRC 15155 / AMRC-C165).